A 447-amino-acid polypeptide reads, in one-letter code: MTRKLFGTDGVRGRANTYPMTAEIALRMGAAAGRYFRRDSSIAHRVVIGKDTRLSGYMIENALTAGLTSTGMNVLLLSPVPTPAVGLLTPSMRADLGIMISASHNPAEDNGIKLFGPDGFKLSDEVEAEIEALMASDIPLAPAAEIGRAKHVYDGLFRYIERVKSTFPTELRLDGLKVVVDCANGAAYRAAPEVLWELGADVVAMGVEPDGLNINLGCGSTKPEAAAAKIREVGAHVGICLDGDADRVVLIDETGQVADGDQIMALFAKRWADEGRLKGRTLAATVMSNLGLERFLADESIVLHRTAVGDRYVVEAMRAGGFNLGGEQSGHIVMTDYATTGDGLIAGLQFLAEMVRTGQSASTLAHNFETVPQVLKNVRFDVGAAPLDAPAVQAAIAAGEERLTGSGRLLIRKSGTEPLIRVMAEAEDEALMTAVVDDIVGAVEDAV.

The active-site Phosphoserine intermediate is the serine 103. Residues serine 103, aspartate 242, aspartate 244, and aspartate 246 each coordinate Mg(2+). Phosphoserine is present on serine 103.

It belongs to the phosphohexose mutase family. Requires Mg(2+) as cofactor. Activated by phosphorylation.

It catalyses the reaction alpha-D-glucosamine 1-phosphate = D-glucosamine 6-phosphate. Its function is as follows. Catalyzes the conversion of glucosamine-6-phosphate to glucosamine-1-phosphate. The protein is Phosphoglucosamine mutase of Jannaschia sp. (strain CCS1).